Reading from the N-terminus, the 494-residue chain is One cut domain family member 3 (494 aa).

Disordered stretches follow at residues 130–162 (AAAVAGAHGGHPHAHPHPAAAPPPPPPPQRLAA), 199–239 (LSPL…GDKL), and 295–319 (AHGPHGGGGGPGGSGGGPSAGAAAE). Pro residues-rich tracts occupy residues 148–158 (AAAPPPPPPPQ) and 214–225 (PQPPPPPPPPPL). A compositionally biased stretch (gly residues) spans 297–313 (GPHGGGGGPGGSGGGPS). The segment at residues 312-398 (PSAGAAAEEI…QRMSALRLAA (87 aa)) is a DNA-binding region (CUT). The homeobox DNA-binding region spans 414 to 473 (PKKQRLVFTDLQRRTLIAIFKENKRPSKEMQVTISQQLGLELNTVSNFFMNARRRCMNRW). The disordered stretch occupies residues 475-494 (EEPSTAPGGPAGATATFSKA). Low complexity predominate over residues 476-494 (EPSTAPGGPAGATATFSKA).

Belongs to the CUT homeobox family.

It is found in the nucleus. Functionally, transcriptional activator. Binds the consensus DNA sequence 5'-DHWATTGAYTWWD-3' on a variety of gene promoters such as those of HNF3B and TTR. The sequence is that of One cut domain family member 3 (ONECUT3) from Homo sapiens (Human).